We begin with the raw amino-acid sequence, 276 residues long: Elongation factor Ts (276 aa).

Positions 81–84 (TDFV) are involved in Mg(2+) ion dislocation from EF-Tu.

It belongs to the EF-Ts family.

The protein resides in the cytoplasm. In terms of biological role, associates with the EF-Tu.GDP complex and induces the exchange of GDP to GTP. It remains bound to the aminoacyl-tRNA.EF-Tu.GTP complex up to the GTP hydrolysis stage on the ribosome. This chain is Elongation factor Ts, found in Leifsonia xyli subsp. xyli (strain CTCB07).